Consider the following 98-residue polypeptide: Integration host factor subunit alpha (98 aa).

A disordered region spans residues 49–70; sequence FGNFDLRDKNQRPGRNPKTGED.

Belongs to the bacterial histone-like protein family. As to quaternary structure, heterodimer of an alpha and a beta chain.

Its function is as follows. This protein is one of the two subunits of integration host factor, a specific DNA-binding protein that functions in genetic recombination as well as in transcriptional and translational control. The sequence is that of Integration host factor subunit alpha from Shewanella baltica (strain OS223).